The following is a 380-amino-acid chain: tRNA pseudouridine synthase B (380 aa).

The active-site Nucleophile is aspartate 63. Residues 309–339 (QNVEDDNDDNDDNDDNDDNDDNDDNDDNDDN) are disordered. The span at 311 to 338 (VEDDNDDNDDNDDNDDNDDNDDNDDNDD) shows a compositional bias: acidic residues.

Belongs to the pseudouridine synthase TruB family. Type 1 subfamily.

It carries out the reaction uridine(55) in tRNA = pseudouridine(55) in tRNA. Responsible for synthesis of pseudouridine from uracil-55 in the psi GC loop of transfer RNAs. This chain is tRNA pseudouridine synthase B, found in Psychrobacter arcticus (strain DSM 17307 / VKM B-2377 / 273-4).